Here is a 524-residue protein sequence, read N- to C-terminus: Lysophospholipid acyltransferase LPCAT4 (524 aa).

The next 2 helical transmembrane spans lie at 40-62 (CLLGALLAPIRVLLAFIVLFLLW) and 87-107 (TVCHNGVLGLSRLLFFLLGFL). An HXXXXD motif motif is present at residues 129–134 (HSTFFD). Residue Asn152 is glycosylated (N-linked (GlcNAc...) asparagine). Residues 489–524 (PPHTSRGTSQTPNASSPGNPTALANGTVQAPKQKGD) are disordered. Polar residues predominate over residues 493-518 (SRGTSQTPNASSPGNPTALANGTVQA).

It belongs to the 1-acyl-sn-glycerol-3-phosphate acyltransferase family. As to expression, widely expressed with predominant level in brain.

The protein localises to the endoplasmic reticulum membrane. The catalysed reaction is a 1-acyl-sn-glycero-3-phosphoethanolamine + an acyl-CoA = a 1,2-diacyl-sn-glycero-3-phosphoethanolamine + CoA. It carries out the reaction a 1-O-(1Z-alkenyl)-sn-glycero-3-phosphoethanolamine + an acyl-CoA = a 1-O-(1Z-alkenyl)-2-acyl-sn-glycero-3-phosphoethanolamine + CoA. The enzyme catalyses a 1-acyl-sn-glycero-3-phosphocholine + an acyl-CoA = a 1,2-diacyl-sn-glycero-3-phosphocholine + CoA. It catalyses the reaction a 1-O-alkyl-sn-glycero-3-phosphocholine + acetyl-CoA = a 1-O-alkyl-2-acetyl-sn-glycero-3-phosphocholine + CoA. The catalysed reaction is a 1-acyl-sn-glycero-3-phospho-L-serine + an acyl-CoA = a 1,2-diacyl-sn-glycero-3-phospho-L-serine + CoA. It carries out the reaction octanoyl-CoA + a 1-acyl-sn-glycero-3-phosphoethanolamine = 1-acyl-2-octanoyl-sn-glycero-3-phosphoethanolamine + CoA. The enzyme catalyses a 1-acyl-sn-glycero-3-phosphoethanolamine + hexadecanoyl-CoA = 1-acyl-2-hexadecanoyl-sn-glycero-3-phosphoethanolamine + CoA. It catalyses the reaction a 1-acyl-sn-glycero-3-phosphoethanolamine + octadecanoyl-CoA = 1-acyl-2-octadecanoyl-sn-glycero-3-phosphoethanolamine + CoA. The catalysed reaction is a 1-acyl-sn-glycero-3-phosphoethanolamine + (9Z)-octadecenoyl-CoA = 1-acyl-2-(9Z)-octadecenoyl-sn-glycero-3-phosphoethanolamine + CoA. It carries out the reaction a 1-acyl-sn-glycero-3-phosphoethanolamine + (5Z,8Z,11Z,14Z)-eicosatetraenoyl-CoA = 1-acyl-2-(5Z,8Z,11Z,14Z)-eicosatetraenoyl-sn-glycero-3-phosphoethanolamine + CoA. The enzyme catalyses a 1-O-(1Z-alkenyl)-sn-glycero-3-phosphoethanolamine + octanoyl-CoA = 1-O-(1Z)-alkenyl-2-octanoyl-sn-glycero-3-phosphoethanolamine + CoA. It catalyses the reaction a 1-O-(1Z-alkenyl)-sn-glycero-3-phosphoethanolamine + hexadecanoyl-CoA = 1-O-(1Z)-alkenyl-2-hexadecanoyl-sn-glycero-3-phosphoethanolamine + CoA. The catalysed reaction is a 1-O-(1Z-alkenyl)-sn-glycero-3-phosphoethanolamine + octadecanoyl-CoA = 1-O-(1Z)-alkenyl-2-octadecanoyl-sn-glycero-3-phosphoethanolamine + CoA. It carries out the reaction a 1-O-(1Z-alkenyl)-sn-glycero-3-phosphoethanolamine + (9Z)-octadecenoyl-CoA = 1-O-(1Z)-alkenyl-2-(9Z)-octadecenoyl-sn-glycero-3-phosphoethanolamine + CoA. The enzyme catalyses a 1-O-(1Z-alkenyl)-sn-glycero-3-phosphoethanolamine + (5Z,8Z,11Z,14Z)-eicosatetraenoyl-CoA = 1-O-(1Z)-alkenyl-2-(5Z,8Z,11Z,14Z)-eicosatetraenoyl-sn-glycero-3-phosphoethanolamine + CoA. It catalyses the reaction a 1-acyl-sn-glycero-3-phosphocholine + hexadecanoyl-CoA = 1-acyl-2-hexadecanoyl-sn-glycero-3-phosphocholine + CoA. The catalysed reaction is a 1-acyl-sn-glycero-3-phosphocholine + (9Z)-octadecenoyl-CoA = a 1-acyl-2-(9Z)-octadecenoyl-sn-glycero-3-phosphocholine + CoA. It carries out the reaction 1-O-hexadecyl-sn-glycero-3-phosphocholine + (9Z)-octadecenoyl-CoA = 1-O-hexadecyl-2-(9Z)-octadecenoyl-sn-glycero-3-phosphocholine + CoA. The enzyme catalyses 1-O-hexadecyl-sn-glycero-3-phosphocholine + (5Z,8Z,11Z,14Z)-eicosatetraenoyl-CoA = 1-O-hexadecyl-2-(5Z,8Z,11Z,14Z)-eicosatetraenoyl-sn-glycero-3-phosphocholine + CoA. It catalyses the reaction 1-hexadecanoyl-sn-glycero-3-phospho-L-serine + (9Z)-octadecenoyl-CoA = 1-hexadecanoyl-2-(9Z-octadecenoyl)-sn-glycero-3-phospho-L-serine + CoA. The catalysed reaction is 1-octadecanoyl-sn-glycero-3-phospho-(1'-sn-glycerol) + (9Z)-octadecenoyl-CoA = 1-octadecanoyl-2-(9Z-octadecenoyl)-sn-glycero-3-phospho-(1'-sn-glycerol) + CoA. It carries out the reaction 1-octadecanoyl-sn-glycero-3-phospho-(1'-sn-glycerol) + (5Z,8Z,11Z,14Z)-eicosatetraenoyl-CoA = 1-octadecanoyl-2-(5Z,8Z,11Z,14Z-eicosatetraenoyl)-sn-glycero-3-phospho-(1'-sn-glycerol) + CoA. The protein operates within lipid metabolism; phospholipid metabolism. Displays acyl-CoA-dependent lysophospholipid acyltransferase activity with a subset of lysophospholipids as substrates; converts lysophosphatidylethanolamine to phosphatidylethanolamine, lysophosphatidylcholine to phosphatidycholine, 1-alkenyl-lysophatidylethanolamine to 1-alkenyl-phosphatidylethanolamine, lysophosphatidylglycerol and alkyl-lysophosphatidylcholine to phosphatidylglycerol and alkyl-phosphatidylcholine, respectively. In contrast, has no lysophosphatidylinositol, glycerol-3-phosphate, diacylglycerol or lysophosphatidic acid acyltransferase activity. Prefers long chain acyl-CoAs (C16, C18) as acyl donors. The protein is Lysophospholipid acyltransferase LPCAT4 (LPCAT4) of Homo sapiens (Human).